The sequence spans 65 residues: Large ribosomal subunit protein bL28 (65 aa).

Positions 1-21 are disordered; the sequence is MAKKDQLTLRGPLYGNNRSHS.

The protein belongs to the bacterial ribosomal protein bL28 family.

The sequence is that of Large ribosomal subunit protein bL28 from Mycoplasma pneumoniae (strain ATCC 29342 / M129 / Subtype 1) (Mycoplasmoides pneumoniae).